We begin with the raw amino-acid sequence, 689 residues long: Glycine--tRNA ligase beta subunit (689 aa).

It belongs to the class-II aminoacyl-tRNA synthetase family. As to quaternary structure, tetramer of two alpha and two beta subunits.

The protein localises to the cytoplasm. The catalysed reaction is tRNA(Gly) + glycine + ATP = glycyl-tRNA(Gly) + AMP + diphosphate. The polypeptide is Glycine--tRNA ligase beta subunit (Actinobacillus succinogenes (strain ATCC 55618 / DSM 22257 / CCUG 43843 / 130Z)).